We begin with the raw amino-acid sequence, 168 residues long: Protein GrpE (168 aa).

This sequence belongs to the GrpE family. As to quaternary structure, homodimer.

The protein localises to the cytoplasm. Functionally, participates actively in the response to hyperosmotic and heat shock by preventing the aggregation of stress-denatured proteins, in association with DnaK and GrpE. It is the nucleotide exchange factor for DnaK and may function as a thermosensor. Unfolded proteins bind initially to DnaJ; upon interaction with the DnaJ-bound protein, DnaK hydrolyzes its bound ATP, resulting in the formation of a stable complex. GrpE releases ADP from DnaK; ATP binding to DnaK triggers the release of the substrate protein, thus completing the reaction cycle. Several rounds of ATP-dependent interactions between DnaJ, DnaK and GrpE are required for fully efficient folding. The polypeptide is Protein GrpE (Thermotoga neapolitana (strain ATCC 49049 / DSM 4359 / NBRC 107923 / NS-E)).